The following is a 414-amino-acid chain: Probable solanesyl-diphosphate synthase 3, chloroplastic (414 aa).

Low complexity predominate over residues 1 to 23; the sequence is MAAPSSLASSSHLSRRATAAASP. The disordered stretch occupies residues 1–36; that stretch reads MAAPSSLASSSHLSRRATAAASPSIPPPSPPPPPQR. The transit peptide at 1-72 directs the protein to the chloroplast; the sequence is MAAPSSLASS…KPGVAAVDVP (72 aa). The segment covering 24-35 has biased composition (pro residues); that stretch reads SIPPPSPPPPPQ. Isopentenyl diphosphate is bound by residues Lys-134, Arg-137, and His-172. Asp-179 and Asp-183 together coordinate Mg(2+). Arg-188 is a binding site for an all-trans-polyprenyl diphosphate. Arg-189 contributes to the isopentenyl diphosphate binding site. 4 residues coordinate an all-trans-polyprenyl diphosphate: Lys-265, Thr-266, Gln-303, and Lys-320.

The protein belongs to the FPP/GGPP synthase family. In terms of assembly, homodimer. The cofactor is Mg(2+).

It localises to the plastid. The protein resides in the chloroplast. It catalyses the reaction 7 isopentenyl diphosphate + (2E)-geranyl diphosphate = all-trans-nonaprenyl diphosphate + 7 diphosphate. Functionally, involved in providing solanesyl diphosphate for plastoquinone-9 (PQ-9) formation. This Oryza sativa subsp. japonica (Rice) protein is Probable solanesyl-diphosphate synthase 3, chloroplastic.